The primary structure comprises 897 residues: Isoleucine--tRNA ligase (897 aa).

The 'HIGH' region motif lies at P59–H69. E552 provides a ligand contact to L-isoleucyl-5'-AMP. Residues K593–S597 carry the 'KMSKS' region motif. K596 provides a ligand contact to ATP. Residues C872, C875, C890, and C893 each contribute to the Zn(2+) site.

The protein belongs to the class-I aminoacyl-tRNA synthetase family. IleS type 1 subfamily. As to quaternary structure, monomer. Zn(2+) serves as cofactor.

The protein resides in the cytoplasm. It carries out the reaction tRNA(Ile) + L-isoleucine + ATP = L-isoleucyl-tRNA(Ile) + AMP + diphosphate. Catalyzes the attachment of isoleucine to tRNA(Ile). As IleRS can inadvertently accommodate and process structurally similar amino acids such as valine, to avoid such errors it has two additional distinct tRNA(Ile)-dependent editing activities. One activity is designated as 'pretransfer' editing and involves the hydrolysis of activated Val-AMP. The other activity is designated 'posttransfer' editing and involves deacylation of mischarged Val-tRNA(Ile). The polypeptide is Isoleucine--tRNA ligase (Mycoplasmoides gallisepticum (strain R(low / passage 15 / clone 2)) (Mycoplasma gallisepticum)).